A 439-amino-acid polypeptide reads, in one-letter code: Polygalacturonase QRT2 (439 aa).

The signal sequence occupies residues 1–21 (MYEKIIILSVFLLTFLPSCFS). The disordered stretch occupies residues 43–69 (RQHQHGHNTRNSHLKNRHGYAPRSSPR). Residues 44-62 (QHQHGHNTRNSHLKNRHGY) are compositionally biased toward basic residues. PbH1 repeat units follow at residues 201–250 (CNNL…HVSG) and 251–272 (TQNI…SIVS). The active-site Proton donor is the aspartate 265. Residue histidine 288 is part of the active site. 2 PbH1 repeats span residues 304-325 (VSNV…RIKT) and 333-354 (AKNI…IINQ).

The protein belongs to the glycosyl hydrolase 28 family. In terms of tissue distribution, expressed predominantly in roots with lower expression levels in rosette leaves, flower buds and siliques. Bearly detected in seeds. Found in flowers undergoing floral organ abscission. Also expressed early in anther development, at the time of microspore separation.

Its subcellular location is the secreted. It localises to the cell wall. The enzyme catalyses (1,4-alpha-D-galacturonosyl)n+m + H2O = (1,4-alpha-D-galacturonosyl)n + (1,4-alpha-D-galacturonosyl)m.. Functionally, polygalacturonase required for cell type-specific pectin degradation to separate microspores. Involved in anther dehiscence and floral organ abscission. This Arabidopsis thaliana (Mouse-ear cress) protein is Polygalacturonase QRT2 (QRT2).